We begin with the raw amino-acid sequence, 393 residues long: Digeranylgeranylglycerophospholipid reductase 2 (393 aa).

Residues Asp33, Cys44, Ala45, Gly47, Arg100, Ala124, Asp280, Gly292, and Ile293 each contribute to the FAD site.

Belongs to the geranylgeranyl reductase family. DGGGPL reductase subfamily. FAD serves as cofactor.

The enzyme catalyses a 2,3-bis-O-phytanyl-sn-glycerol 1-phospholipid + 8 A = a 2,3-bis-O-(geranylgeranyl)-sn-glycerol 1-phospholipid + 8 AH2. It catalyses the reaction 2,3-bis-O-(phytanyl)-sn-glycerol 1-phosphate + 8 A = 2,3-bis-O-(geranylgeranyl)-sn-glycerol 1-phosphate + 8 AH2. The catalysed reaction is CDP-2,3-bis-O-(geranylgeranyl)-sn-glycerol + 8 AH2 = CDP-2,3-bis-O-(phytanyl)-sn-glycerol + 8 A. It carries out the reaction archaetidylserine + 8 AH2 = 2,3-bis-O-phytanyl-sn-glycero-3-phospho-L-serine + 8 A. The protein operates within membrane lipid metabolism; glycerophospholipid metabolism. Functionally, is involved in the reduction of 2,3-digeranylgeranylglycerophospholipids (unsaturated archaeols) into 2,3-diphytanylglycerophospholipids (saturated archaeols) in the biosynthesis of archaeal membrane lipids. Catalyzes the formation of archaetidic acid (2,3-di-O-phytanyl-sn-glyceryl phosphate) from 2,3-di-O-geranylgeranylglyceryl phosphate (DGGGP) via the hydrogenation of each double bond of the isoprenoid chains. Is also probably able to reduce double bonds of geranyl groups in CDP-2,3-bis-O-(geranylgeranyl)-sn-glycerol and archaetidylserine, thus acting at various stages in the biosynthesis of archaeal membrane lipids. The protein is Digeranylgeranylglycerophospholipid reductase 2 of Methanosphaera stadtmanae (strain ATCC 43021 / DSM 3091 / JCM 11832 / MCB-3).